A 122-amino-acid polypeptide reads, in one-letter code: FMN-binding protein (122 aa).

In terms of assembly, monomer and homodimer. Requires FMN as cofactor.

It is found in the cytoplasm. Its function is as follows. Functions as a redox protein with a potential of -325 mV. In Nitratidesulfovibrio vulgaris (strain DSM 19637 / Miyazaki F) (Desulfovibrio vulgaris), this protein is FMN-binding protein.